The following is a 48-amino-acid chain: Mating-type pheromone BAP1(2) (48 aa).

A Cysteine methyl ester modification is found at Cys45. Cys45 carries S-farnesyl cysteine lipidation. A propeptide spans 46 to 48 (VRG) (removed in mature form).

Its subcellular location is the cell membrane. In terms of biological role, activates B-regulated development. This chain is Mating-type pheromone BAP1(2) (BAP1(2)), found in Schizophyllum commune (Split gill fungus).